A 282-amino-acid chain; its full sequence is 3-hydroxyanthranilate 3,4-dioxygenase (282 aa).

Residues 1–160 are domain A (catalytic); the sequence is MAMAINVKKW…SKQYKSGKPD (160 aa). R43 serves as a coordination point for O2. Residues H47, E53, and H91 each contribute to the Fe cation site. Residue E53 participates in substrate binding. The substrate site is built by R95 and E105. A linker region spans residues 161–177; the sequence is PDQPKAKMPFCLSTEQV. The tract at residues 178–282 is domain B; sequence MEPFSFQHWL…LSTSQVPLPM (105 aa).

Belongs to the 3-HAO family. Monomer. Fe(2+) serves as cofactor.

It localises to the cytoplasm. The protein localises to the cytosol. It catalyses the reaction 3-hydroxyanthranilate + O2 = (2Z,4Z)-2-amino-3-carboxymuconate 6-semialdehyde. It functions in the pathway cofactor biosynthesis; NAD(+) biosynthesis; quinolinate from L-kynurenine: step 3/3. In terms of biological role, catalyzes the oxidative ring opening of 3-hydroxyanthranilate to 2-amino-3-carboxymuconate semialdehyde, which spontaneously cyclizes to quinolinate. The chain is 3-hydroxyanthranilate 3,4-dioxygenase (haao) from Xenopus laevis (African clawed frog).